A 98-amino-acid chain; its full sequence is Citrate lyase acyl carrier protein (98 aa).

Ser14 carries the post-translational modification O-(phosphoribosyl dephospho-coenzyme A)serine.

Belongs to the CitD family. Oligomer with a subunit composition of (alpha,beta,gamma)6.

The protein resides in the cytoplasm. Covalent carrier of the coenzyme of citrate lyase. The protein is Citrate lyase acyl carrier protein of Vibrio cholerae serotype O1 (strain ATCC 39541 / Classical Ogawa 395 / O395).